Here is a 936-residue protein sequence, read N- to C-terminus: Isoleucine--tRNA ligase (936 aa).

Positions 58 to 68 match the 'HIGH' region motif; sequence PYANGRAHLGT. Residue Glu-561 coordinates L-isoleucyl-5'-AMP. A 'KMSKS' region motif is present at residues 602–606; the sequence is KMSKS. Lys-605 lines the ATP pocket. Positions 899, 902, 919, and 922 each coordinate Zn(2+).

Belongs to the class-I aminoacyl-tRNA synthetase family. IleS type 1 subfamily. In terms of assembly, monomer. The cofactor is Zn(2+).

Its subcellular location is the cytoplasm. The enzyme catalyses tRNA(Ile) + L-isoleucine + ATP = L-isoleucyl-tRNA(Ile) + AMP + diphosphate. In terms of biological role, catalyzes the attachment of isoleucine to tRNA(Ile). As IleRS can inadvertently accommodate and process structurally similar amino acids such as valine, to avoid such errors it has two additional distinct tRNA(Ile)-dependent editing activities. One activity is designated as 'pretransfer' editing and involves the hydrolysis of activated Val-AMP. The other activity is designated 'posttransfer' editing and involves deacylation of mischarged Val-tRNA(Ile). The sequence is that of Isoleucine--tRNA ligase from Coxiella burnetii (strain CbuG_Q212) (Coxiella burnetii (strain Q212)).